The chain runs to 552 residues: Chromosomal replication initiator protein DnaA (552 aa).

The tract at residues 1 to 90 (MWNETWNEIT…FTVAVTVDPT (90 aa)) is domain I, interacts with DnaA modulators. The segment at 90 to 210 (TLDVIQDLPH…KPAHDPDRNG (121 aa)) is domain II. The tract at residues 113-213 (EHPHYSPVSQ…HDPDRNGSLN (101 aa)) is disordered. Residues 155-170 (PQPSQSSQSAQQQPAQ) are compositionally biased toward low complexity. Residues 211 to 427 (SLNPRYTFDT…GAFIRVSAYA (217 aa)) form a domain III, AAA+ region region. ATP is bound by residues G255, G257, K258, and T259. The domain IV, binds dsDNA stretch occupies residues 428 to 552 (SLNEAPINMA…TQQIKSSDRA (125 aa)).

It belongs to the DnaA family. In terms of assembly, oligomerizes as a right-handed, spiral filament on DNA at oriC.

It localises to the cytoplasm. In terms of biological role, plays an essential role in the initiation and regulation of chromosomal replication. ATP-DnaA binds to the origin of replication (oriC) to initiate formation of the DNA replication initiation complex once per cell cycle. Binds the DnaA box (a 9 base pair repeat at the origin) and separates the double-stranded (ds)DNA. Forms a right-handed helical filament on oriC DNA; dsDNA binds to the exterior of the filament while single-stranded (ss)DNA is stabiized in the filament's interior. The ATP-DnaA-oriC complex binds and stabilizes one strand of the AT-rich DNA unwinding element (DUE), permitting loading of DNA polymerase. After initiation quickly degrades to an ADP-DnaA complex that is not apt for DNA replication. Binds acidic phospholipids. The protein is Chromosomal replication initiator protein DnaA of Corynebacterium diphtheriae (strain ATCC 700971 / NCTC 13129 / Biotype gravis).